A 381-amino-acid chain; its full sequence is Transaldolase 2 (381 aa).

Lys-141 serves as the catalytic Schiff-base intermediate with substrate.

It belongs to the transaldolase family. Type 2 subfamily.

The protein resides in the cytoplasm. It carries out the reaction D-sedoheptulose 7-phosphate + D-glyceraldehyde 3-phosphate = D-erythrose 4-phosphate + beta-D-fructose 6-phosphate. It functions in the pathway carbohydrate degradation; pentose phosphate pathway; D-glyceraldehyde 3-phosphate and beta-D-fructose 6-phosphate from D-ribose 5-phosphate and D-xylulose 5-phosphate (non-oxidative stage): step 2/3. Its function is as follows. Transaldolase is important for the balance of metabolites in the pentose-phosphate pathway. The chain is Transaldolase 2 (tal2) from Nostoc sp. (strain PCC 7120 / SAG 25.82 / UTEX 2576).